The sequence spans 362 residues: Peptide chain release factor 2 (362 aa).

Gln-250 carries the N5-methylglutamine modification.

The protein belongs to the prokaryotic/mitochondrial release factor family. Post-translationally, methylated by PrmC. Methylation increases the termination efficiency of RF2.

It is found in the cytoplasm. In terms of biological role, peptide chain release factor 2 directs the termination of translation in response to the peptide chain termination codons UGA and UAA. This chain is Peptide chain release factor 2, found in Clostridium perfringens (strain ATCC 13124 / DSM 756 / JCM 1290 / NCIMB 6125 / NCTC 8237 / Type A).